The chain runs to 303 residues: uncharacterized protein (303 aa).

Disordered stretches follow at residues 1–89 (MTSP…NVRS) and 132–159 (SELP…STPR). The segment covering 61–89 (RASQSGYRPSDPLTTTRQSNPAPGANVRS) has biased composition (polar residues). A run of 2 helical transmembrane segments spans residues 205 to 225 (LLLS…LYLL) and 264 to 284 (VLVG…AAFV).

This sequence to M.tuberculosis Rv0007.

The protein localises to the cell membrane. This is an uncharacterized protein from Mycobacterium leprae (strain TN).